Consider the following 349-residue polypeptide: MISSKLNNNYYNNPFTFNNNSNTISVTQKEALKKTIKEAAVLTDIALVNLNNDGPSLEISALIESKCKQLYEYSTTNTITIYNLLNYNNNNNYNNINRYNNNNSPSNNNNNNNNNNNNNNNNNNNNNSNNNNNNNNINNNNNSNNNNINNNNNNNSENNCNNNFNVNKNLDNDKYNNKSCKNNNINNNNNNNNNSENKEKNNINNNNEKENNEYNNNRSASTSPVIKRSKSLSPILQFDKIDLEEEYTSDYDYSDGSNESSSPTLSASTLSSEDSKPKVLKRGRGRPSKPKPVQCFSCFRSNTPEWRKGKDKDGNVIDLCNACGLSYMKYIKKAKESKDKLSINNLINK.

2 stretches are compositionally biased toward low complexity: residues 95-169 (NINR…VNKN) and 177-195 (NKSC…NNNS). 2 disordered regions span residues 95 to 227 (NINR…PVIK) and 250 to 294 (DYDY…KPVQ). The segment covering 196–212 (ENKEKNNINNNNEKENN) has biased composition (basic and acidic residues). Residues 257–272 (SNESSSPTLSASTLSS) are compositionally biased toward low complexity. Positions 278–289 (KVLKRGRGRPSK) are enriched in basic residues. The GATA-type zinc-finger motif lies at 295–323 (CFSCFRSNTPEWRKGKDKDGNVIDLCNAC).

In Dictyostelium discoideum (Social amoeba), this protein is GATA zinc finger domain-containing protein 24 (gtaX).